The chain runs to 355 residues: Chorismate synthase (355 aa).

Arg48 provides a ligand contact to NADP(+). Residues 125–127 (RSS), 239–240 (NA), Gly280, 295–299 (KPVAT), and Arg321 contribute to the FMN site.

This sequence belongs to the chorismate synthase family. Homotetramer. FMNH2 is required as a cofactor.

The catalysed reaction is 5-O-(1-carboxyvinyl)-3-phosphoshikimate = chorismate + phosphate. It functions in the pathway metabolic intermediate biosynthesis; chorismate biosynthesis; chorismate from D-erythrose 4-phosphate and phosphoenolpyruvate: step 7/7. In terms of biological role, catalyzes the anti-1,4-elimination of the C-3 phosphate and the C-6 proR hydrogen from 5-enolpyruvylshikimate-3-phosphate (EPSP) to yield chorismate, which is the branch point compound that serves as the starting substrate for the three terminal pathways of aromatic amino acid biosynthesis. This reaction introduces a second double bond into the aromatic ring system. This is Chorismate synthase from Flavobacterium psychrophilum (strain ATCC 49511 / DSM 21280 / CIP 103535 / JIP02/86).